We begin with the raw amino-acid sequence, 400 residues long: Elongation factor Tu (400 aa).

In terms of domain architecture, tr-type G spans 10–209 (KPHVNIGTIG…EVDNYIPTPE (200 aa)). Residues 19 to 26 (GHVDHGKT) form a G1 region. Position 19–26 (19–26 (GHVDHGKT)) interacts with GTP. Residue Thr26 participates in Mg(2+) binding. Positions 60 to 64 (GITIN) are G2. A G3 region spans residues 81–84 (DCPG). GTP contacts are provided by residues 81-85 (DCPGH) and 136-139 (NKCD). Positions 136-139 (NKCD) are G4. Positions 174–176 (SAL) are G5.

The protein belongs to the TRAFAC class translation factor GTPase superfamily. Classic translation factor GTPase family. EF-Tu/EF-1A subfamily. Monomer.

Its subcellular location is the cytoplasm. It carries out the reaction GTP + H2O = GDP + phosphate + H(+). GTP hydrolase that promotes the GTP-dependent binding of aminoacyl-tRNA to the A-site of ribosomes during protein biosynthesis. This Ruminiclostridium cellulolyticum (strain ATCC 35319 / DSM 5812 / JCM 6584 / H10) (Clostridium cellulolyticum) protein is Elongation factor Tu.